The sequence spans 149 residues: Calmodulin (149 aa).

Ala2 bears the N-acetylalanine mark. EF-hand domains are found at residues 8-43 (EQIA…LGQN), 44-79 (PTEA…KMKD), 81-116 (DSEE…LGEK), and 117-149 (LTDE…MTAK). Asp21, Asp23, Asp25, Thr27, Glu32, Asp57, Asp59, Asn61, Thr63, Glu68, Asp94, Asp96, Asn98, Tyr100, and Glu105 together coordinate Ca(2+). An N6,N6,N6-trimethyllysine modification is found at Lys116. Residues Asp130, Asp132, Asp134, Gln136, and Glu141 each coordinate Ca(2+).

It belongs to the calmodulin family.

Its function is as follows. Calmodulin acts as part of a calcium signal transduction pathway by mediating the control of a large number of enzymes, ion channels, aquaporins and other proteins through calcium-binding. Calcium-binding is required for the activation of calmodulin. Among the enzymes to be stimulated by the calmodulin-calcium complex are a number of protein kinases, such as myosin light-chain kinases and calmodulin-dependent protein kinase type II (CaMK2), and phosphatases. This is Calmodulin (calm) from Oreochromis mossambicus (Mozambique tilapia).